The chain runs to 221 residues: Ependymin (221 aa).

Positions 1-21 (MQAFAVAALSIWLCLGATTLA) are cleaved as a signal peptide. Asparagine 37, asparagine 77, and asparagine 101 each carry an N-linked (GlcNAc...) asparagine glycan.

This sequence belongs to the ependymin family. As to quaternary structure, forms disulfide-linked dimers. Post-translationally, binds calcium through the terminal sialic acids. As to expression, EPDs are synthesized in the meninx and secreted in the cerebrospinal fluid.

It is found in the secreted. Its function is as follows. May play a role in neural plasticity. May be involved during axon regeneration. The polypeptide is Ependymin (epd) (Esox lucius (Northern pike)).